The sequence spans 325 residues: SAM pointed domain-containing Ets transcription factor (325 aa).

Disordered stretches follow at residues 27 to 50 and 79 to 100; these read GTEK…PPAT and ARAG…SQAS. In terms of domain architecture, PNT spans 119–203; sequence EVLKDIETAC…AHLDIWKSAA (85 aa). A DNA-binding region (ETS) is located at residues 239-322; it reads IHLWQFLKEL…ISQRLVYQFV (84 aa).

The protein belongs to the ETS family. In terms of assembly, interacts with the DNA-binding domain of the androgen receptor. Interacts with NKX3-1. As to expression, expressed in the accessory glands of sex organs including the prostate, seminal vesicle, coagulating gland in males, the oviduct in females, and in intestines. Expression is epithelial-specific.

The protein resides in the nucleus. Its function is as follows. May function as an androgen-independent transactivator of the prostate-specific antigen (PSA) promoter. Binds to 5'-GGAT-3' DNA sequences. May play a role in the regulation of the prostate gland and/or prostate cancer development. Acts as a transcriptional activator for SERPINB5 promoter. This Mus musculus (Mouse) protein is SAM pointed domain-containing Ets transcription factor (Spdef).